A 290-amino-acid polypeptide reads, in one-letter code: U3 small nucleolar ribonucleoprotein protein IMP4 (290 aa).

The Brix domain maps to 86-267 (PRIIVTTSRD…LFELRLGTLE (182 aa)).

In terms of assembly, component of a heterotrimeric complex containing IMP3, IMP4 and MPP10. Interacts with MPP10. Component of the ribosomal small subunit (SSU) processome composed of at least 40 protein subunits and snoRNA U3.

Its subcellular location is the nucleus. It localises to the nucleolus. Functionally, required for the early cleavages at sites A0, A1 and A2 during 18S ribosomal pre-RNA processing. The polypeptide is U3 small nucleolar ribonucleoprotein protein IMP4 (IMP4) (Saccharomyces cerevisiae (strain ATCC 204508 / S288c) (Baker's yeast)).